A 600-amino-acid polypeptide reads, in one-letter code: Lamin-B2 (600 aa).

The tract at residues 2–27 (SGTPIRGTPGGTPLSPTRISRLQEKE) is head. The residue at position 16 (Ser16) is a Phosphoserine; by CDK1. One can recognise an IF rod domain in the interval 25–381 (EKEELRQLND…KLLEGEEERL (357 aa)). The interval 28–64 (ELRQLNDRLAVYIDRVRALELENDRLLVKISEKEEVT) is coil 1A. The coil 1B stretch occupies residues 75–212 (YESELADARR…NVFEEEIRET (138 aa)). A coil 2 region spans residues 237–379 (QALEDLRNQH…YRKLLEGEEE (143 aa)). Disordered stretches follow at residues 377–449 (EEER…QMSQ) and 568–600 (ENEEEEDEADFGEEDLFNQQGDPRTTSRGCLVM). Positions 380–600 (RLKLSPSPSS…RTTSRGCLVM (221 aa)) are tail. Over residues 383–410 (LSPSPSSRVTVSRATSSSSSSSTSLVRS) the composition is skewed to low complexity. Ser386 is subject to Phosphoserine. Residues 414–419 (KRRRIE) carry the Nuclear localization signal motif. One can recognise an LTD domain in the interval 445 to 562 (FQMSQQASAT…EEVAVRTVTK (118 aa)). The span at 569 to 583 (NEEEEDEADFGEEDL) shows a compositional bias: acidic residues. Residues 584–600 (FNQQGDPRTTSRGCLVM) show a composition bias toward polar residues. At Cys597 the chain carries Cysteine methyl ester. A lipid anchor (S-farnesyl cysteine) is attached at Cys597. Residues 598–600 (LVM) constitute a propeptide, removed in mature form.

It belongs to the intermediate filament family. Homodimer. Lamin dimers then assemble into dimeric head-to-tail polymers. Ultimately, two head-to-tail polymers assemble laterally into a protofilament with a uniformly shaped rod of 3.5 nm in diameter. In terms of processing, phosphorylation plays a key role in lamin organization, subcellular localization and nuclear envelope disintegration. Phosphorylation by CDK1 at Ser-16 at the onset of mitosis drives lamin disassembly and nuclear envelope breakdown.

Its subcellular location is the nucleus lamina. The protein resides in the nucleus envelope. It is found in the nucleus. The protein localises to the nucleoplasm. It localises to the nucleus matrix. In terms of biological role, lamins are intermediate filament proteins that assemble into a filamentous meshwork, and which constitute the major components of the nuclear lamina, a fibrous layer on the nucleoplasmic side of the inner nuclear membrane. Lamins provide a framework for the nuclear envelope, bridging the nuclear envelope and chromatin. Plays an important role in nuclear assembly, chromatin organization, nuclear membrane and telomere dynamics. The protein is Lamin-B2 (LMNB2) of Gallus gallus (Chicken).